Here is a 344-residue protein sequence, read N- to C-terminus: L-erythro-3,5-diaminohexanoate dehydrogenase (344 aa).

The protein belongs to the KDD family. As to quaternary structure, homodimer.

The enzyme catalyses (3S,5S)-3,5-diaminohexanoate + NAD(+) + H2O = (5S)-5-amino-3-oxohexanoate + NH4(+) + NADH + H(+). Its pathway is amino-acid degradation; L-lysine degradation via acetate pathway. In terms of biological role, involved in the anaerobic fermentation of lysine. Catalyzes the oxidative deamination of L-erythro-3,5-diaminohexanoate (3,5-DAH) to 3-keto-5-aminohexanoate (KAH). The sequence is that of L-erythro-3,5-diaminohexanoate dehydrogenase from Acetoanaerobium sticklandii (strain ATCC 12662 / DSM 519 / JCM 1433 / CCUG 9281 / NCIMB 10654 / HF) (Clostridium sticklandii).